Here is a 239-residue protein sequence, read N- to C-terminus: Fatty acid metabolism regulator protein (239 aa).

Positions 6 to 74 constitute an HTH gntR-type domain; the sequence is KGPASFAEKY…HGKPTRVNNF (69 aa). The H-T-H motif DNA-binding region spans 34 to 53; sequence ERELSELIGVTRTTLREVLQ.

As to quaternary structure, homodimer.

The protein resides in the cytoplasm. Functionally, multifunctional regulator of fatty acid metabolism. The protein is Fatty acid metabolism regulator protein of Shewanella pealeana (strain ATCC 700345 / ANG-SQ1).